A 136-amino-acid chain; its full sequence is ATP synthase epsilon chain (136 aa).

The protein belongs to the ATPase epsilon chain family. As to quaternary structure, F-type ATPases have 2 components, CF(1) - the catalytic core - and CF(0) - the membrane proton channel. CF(1) has five subunits: alpha(3), beta(3), gamma(1), delta(1), epsilon(1). CF(0) has three main subunits: a, b and c.

It is found in the cell membrane. In terms of biological role, produces ATP from ADP in the presence of a proton gradient across the membrane. The polypeptide is ATP synthase epsilon chain (Exiguobacterium sp. (strain ATCC BAA-1283 / AT1b)).